The following is a 324-amino-acid chain: MTKSIFEYKDDQDWYLASFGSYNHLTYFGDDEAYEQYVDFFQGLTNTLDVSGFQLHVVKHSSDLRLVSFILDCLKEELGRDLVVTQHQGTLLVSEGDKLLYVHVPREGVSLDGFFGSDNKSDFGDVLLIATRNEGKTKEFRKLFGKLGIKVENLNDYPDLPEVAETGMTFEENARLKAETISKLTGKMVLSDDSGLQVDVLGGLPGVWSARFAGPEATDAENNAKLLHELAMVLDDSKRSAQFHTTLVVAAPGRDSLVVDADWKGYIGREPKGDNGFGYDPLFLVGNTGRTAAELSTEEKNEQSHRGQAVKKLMEVFPAWQNKQ.

The segment at 1 to 126 is unknown; it reads MTKSIFEYKD…SDNKSDFGDV (126 aa). The interval 127-324 is NTP pyrophosphatase; sequence LLIATRNEGK…EVFPAWQNKQ (198 aa). Substrate is bound at residue 131–136; the sequence is TRNEGK. D193 acts as the Proton acceptor in catalysis. D193 serves as a coordination point for Mg(2+). Residues S194, 277–280, K300, and 305–306 each bind substrate; these read FGYD and HR.

It belongs to the HAM1 NTPase family. In terms of assembly, homodimer. The cofactor is Mg(2+).

The enzyme catalyses XTP + H2O = XMP + diphosphate + H(+). It catalyses the reaction dITP + H2O = dIMP + diphosphate + H(+). It carries out the reaction ITP + H2O = IMP + diphosphate + H(+). Functionally, pyrophosphatase that catalyzes the hydrolysis of nucleoside triphosphates to their monophosphate derivatives, with a high preference for the non-canonical purine nucleotides XTP (xanthosine triphosphate), dITP (deoxyinosine triphosphate) and ITP. Seems to function as a house-cleaning enzyme that removes non-canonical purine nucleotides from the nucleotide pool, thus preventing their incorporation into DNA/RNA and avoiding chromosomal lesions. This is dITP/XTP pyrophosphatase from Streptococcus thermophilus (strain CNRZ 1066).